An 84-amino-acid polypeptide reads, in one-letter code: U4-theraphotoxin-Hhn1a (84 aa).

The signal sequence occupies residues 1–22; that stretch reads MKVTLIAILTRAAVLVLHTTAA. The propeptide occupies 23–47; that stretch reads EELEESQLMEVSMPDTELAAVDEER. 3 disulfides stabilise this stretch: Cys-51–Cys-65, Cys-55–Cys-76, and Cys-70–Cys-81.

Belongs to the neurotoxin 12 (Hwtx-2) family. 02 (Hwtx-2) subfamily. As to expression, expressed by the venom gland.

The protein localises to the secreted. Postsynaptic neurotoxin. This Cyriopagopus hainanus (Chinese bird spider) protein is U4-theraphotoxin-Hhn1a.